Consider the following 186-residue polypeptide: MSKTDWNASGLSRPSPSAHWPSRKLWQHGQKYQTTQDRSEPPAGKRRQAVRVSANHASQQLDQLKAVHLASAVRDLERAMTTLKLWESPQEISRHQALGYSVIMFMITAVKRLRESKMLTLSWFNQALMVIAPSQEETMNLKTAMWILANLIPRDMLSLTGDLLPSLWGSGLLMLKLQKEGRSTSS.

Residues 1–15 (MSKTDWNASGLSRPS) show a composition bias toward polar residues. Residues 1-44 (MSKTDWNASGLSRPSPSAHWPSRKLWQHGQKYQTTQDRSEPPAG) are disordered.

It belongs to the morbillivirus protein C family. As to quaternary structure, interacts with the phosphoprotein (via C-terminus); this interaction allows C to associate with the ribonucleocapsid.

It is found in the host nucleus. The protein localises to the host cytoplasmic vesicle. Functionally, ribonucleocapsid-associated protein that interacts with the phosphoprotein (P), thereby increasing replication accuracy and processivity of the polymerase complex. The polypeptide is Protein C (P/V/C) (Homo sapiens (Human)).